The chain runs to 126 residues: Defensin-like protein 183 (126 aa).

A signal peptide spans 1–26 (MEKALSLVVFIIFSIMLASVENKVNA). 8 cysteine pairs are disulfide-bonded: Cys-29–Cys-68, Cys-36–Cys-55, Cys-39–Cys-62, Cys-43–Cys-64, Cys-80–Cys-126, Cys-91–Cys-111, Cys-96–Cys-120, and Cys-100–Cys-122.

It belongs to the DEFL family.

The protein localises to the secreted. In Arabidopsis thaliana (Mouse-ear cress), this protein is Defensin-like protein 183 (LCR19).